The chain runs to 220 residues: Peritrophin-55 (220 aa).

Residues 1–19 form the signal peptide; sequence MKSVFVCTLVLALAHHAFA. A glycan (N-linked (GlcNAc...) asparagine) is linked at asparagine 29. The Chitin-binding type-2 domain maps to 33–95; the sequence is ITPCLGNDII…NFIPAPTCEY (63 aa). A disulfide bridge links cysteine 68 with cysteine 84. Residues 116-165 are compositionally biased toward low complexity; that stretch reads TTLKTTPSKTTPIVTTAPPSTPVPSTIVTNKPDPTTPKTTKPPKVTTTVN. The disordered stretch occupies residues 116 to 220; sequence TTLKTTPSKT…TPPSIVQLQN (105 aa). Over residues 197-210 the composition is skewed to pro residues; sequence PTPPGMPPTPPSFG.

Post-translationally, glycosylated. Larval peritrophic membrane.

Functionally, may bind oligosaccharide structures. The polypeptide is Peritrophin-55 (Lucilia cuprina (Green bottle fly)).